We begin with the raw amino-acid sequence, 138 residues long: ATP synthase epsilon chain (138 aa).

This sequence belongs to the ATPase epsilon chain family. As to quaternary structure, F-type ATPases have 2 components, CF(1) - the catalytic core - and CF(0) - the membrane proton channel. CF(1) has five subunits: alpha(3), beta(3), gamma(1), delta(1), epsilon(1). CF(0) has three main subunits: a, b and c.

It localises to the cell inner membrane. Functionally, produces ATP from ADP in the presence of a proton gradient across the membrane. This Bartonella quintana (strain Toulouse) (Rochalimaea quintana) protein is ATP synthase epsilon chain.